Reading from the N-terminus, the 568-residue chain is Dual specificity tyrosine-phosphorylation-regulated kinase 3 (568 aa).

Residues 1-168 (MKWKEKLGDG…HGVIGGPNNG (168 aa)) form a disordered region. A compositionally biased stretch (polar residues) spans 77–114 (SNTVQSDGISDSEKCSPTVSQGKSSDCLNTVKSNSSSK). The Protein kinase domain occupies 189-502 (YEVLKIIGKG…PAQALRHPWI (314 aa)). Residues 195–203 (IGKGSFGQV) and Lys-218 contribute to the ATP site. Asp-315 functions as the Proton acceptor in the catalytic mechanism. Ser-330 carries the phosphoserine modification. Residue Tyr-349 is modified to Phosphotyrosine. A Nuclear localization signal motif is present at residues 448–461 (RSRRGKKRGPPGSK).

This sequence belongs to the protein kinase superfamily. CMGC Ser/Thr protein kinase family. MNB/DYRK subfamily. In terms of assembly, interacts with SIRT1. Requires Mg(2+) as cofactor. Protein kinase activity is activated following autophosphorylation at Tyr-349. Autophosphorylation at Ser-330 stabilizes the protein and enhances the protein kinase activity. In terms of processing, ubiquitinated at anaphase by the anaphase-promoting complex (APC/C), leading to its degradation by the proteasome.

The protein resides in the nucleus. Its subcellular location is the cytoplasm. It localises to the nucleus speckle. The protein localises to the cytoplasmic granule. It is found in the cytoskeleton. The protein resides in the microtubule organizing center. Its subcellular location is the centrosome. The catalysed reaction is L-seryl-[protein] + ATP = O-phospho-L-seryl-[protein] + ADP + H(+). It catalyses the reaction L-threonyl-[protein] + ATP = O-phospho-L-threonyl-[protein] + ADP + H(+). The enzyme catalyses L-tyrosyl-[protein] + ATP = O-phospho-L-tyrosyl-[protein] + ADP + H(+). With respect to regulation, protein kinase activity is activated following autophosphorylation at Tyr-349. In terms of biological role, dual-specificity protein kinase that promotes disassembly of several types of membraneless organelles during mitosis, such as stress granules, nuclear speckles and pericentriolar material. Dual-specificity tyrosine-regulated kinases (DYRKs) autophosphorylate a critical tyrosine residue in their activation loop and phosphorylate their substrate on serine and threonine residues. Acts as a central dissolvase of membraneless organelles during the G2-to-M transition, after the nuclear-envelope breakdown: acts by mediating phosphorylation of multiple serine and threonine residues in unstructured domains of proteins, such as SRRM1 and PCM1. Does not mediate disassembly of all membraneless organelles: disassembly of P-body and nucleolus is not regulated by DYRK3. Dissolution of membraneless organelles at the onset of mitosis is also required to release mitotic regulators, such as ZNF207, from liquid-unmixed organelles where they are sequestered and keep them dissolved during mitosis. Regulates mTORC1 by mediating the dissolution of stress granules: during stressful conditions, DYRK3 partitions from the cytosol to the stress granule, together with mTORC1 components, which prevents mTORC1 signaling. When stress signals are gone, the kinase activity of DYRK3 is required for the dissolution of stress granule and mTORC1 relocation to the cytosol: acts by mediating the phosphorylation of the mTORC1 inhibitor AKT1S1, allowing full reactivation of mTORC1 signaling. Also acts as a negative regulator of EPO-dependent erythropoiesis: may place an upper limit on red cell production during stress erythropoiesis. Inhibits cell death due to cytokine withdrawal in hematopoietic progenitor cells. Promotes cell survival upon genotoxic stress through phosphorylation of SIRT1: this in turn inhibits p53/TP53 activity and apoptosis. The polypeptide is Dual specificity tyrosine-phosphorylation-regulated kinase 3 (Macaca fascicularis (Crab-eating macaque)).